Here is a 447-residue protein sequence, read N- to C-terminus: Na(+)-translocating NADH-quinone reductase subunit A (447 aa).

Belongs to the NqrA family. Composed of six subunits; NqrA, NqrB, NqrC, NqrD, NqrE and NqrF.

The enzyme catalyses a ubiquinone + n Na(+)(in) + NADH + H(+) = a ubiquinol + n Na(+)(out) + NAD(+). In terms of biological role, NQR complex catalyzes the reduction of ubiquinone-1 to ubiquinol by two successive reactions, coupled with the transport of Na(+) ions from the cytoplasm to the periplasm. NqrA to NqrE are probably involved in the second step, the conversion of ubisemiquinone to ubiquinol. The protein is Na(+)-translocating NADH-quinone reductase subunit A of Neisseria meningitidis serogroup C / serotype 2a (strain ATCC 700532 / DSM 15464 / FAM18).